Consider the following 298-residue polypeptide: MVDEILKLKKEKGYIILAHNYQIPELQDIADFVGDSLQLARKAMELSEKKILFLGVDFMAELVKILNPDKKVIVPDRSATCPMANRLTPEIIREYREKFPDAPVVLYVNSTSECKTLADVICTSANAVEVVKKLDSSVVIFGPDRNLGEYVAEKTGKKVITIPENGHCPVHQFNAESIDAVRKKYPDAKVIVHPECPKPVRDKADYVGSTGQMEKIPEKDPSRIFVIGTEIGMIHKLKKKFPDREFVPLEMAVCVNMKKNTLENTLHALQTESFEVILPKEVIEKAKKPILRMFELMG.

Residues His19 and Ser36 each contribute to the iminosuccinate site. Cys81 is a [4Fe-4S] cluster binding site. Iminosuccinate-binding positions include 107 to 109 (YVN) and Ser124. Cys168 is a binding site for [4Fe-4S] cluster. Iminosuccinate contacts are provided by residues 193 to 195 (HPE) and Thr210. Residue Cys254 participates in [4Fe-4S] cluster binding.

The protein belongs to the quinolinate synthase family. Type 2 subfamily. Requires [4Fe-4S] cluster as cofactor.

It is found in the cytoplasm. It catalyses the reaction iminosuccinate + dihydroxyacetone phosphate = quinolinate + phosphate + 2 H2O + H(+). It participates in cofactor biosynthesis; NAD(+) biosynthesis; quinolinate from iminoaspartate: step 1/1. Inhibited by 4,5 dithiohydroxyphthalic acid (DTHPA) analogs, which bind to the catalytic iron site of the [4Fe-4S] cluster. In terms of biological role, catalyzes the condensation of iminoaspartate with dihydroxyacetone phosphate to form quinolinate. In Thermotoga maritima (strain ATCC 43589 / DSM 3109 / JCM 10099 / NBRC 100826 / MSB8), this protein is Quinolinate synthase.